The chain runs to 627 residues: UvrABC system protein C (627 aa).

The 80-residue stretch at 26 to 105 (PEPGVYFMRD…IKQHQPYFNV (80 aa)) folds into the GIY-YIG domain. The UVR domain occupies 215–250 (QELIDILSEQMEKAAEALNFEVAARIRDQIAGLKSL).

The protein belongs to the UvrC family. As to quaternary structure, interacts with UvrB in an incision complex.

It localises to the cytoplasm. Functionally, the UvrABC repair system catalyzes the recognition and processing of DNA lesions. UvrC both incises the 5' and 3' sides of the lesion. The N-terminal half is responsible for the 3' incision and the C-terminal half is responsible for the 5' incision. This chain is UvrABC system protein C, found in Trichormus variabilis (strain ATCC 29413 / PCC 7937) (Anabaena variabilis).